A 200-amino-acid polypeptide reads, in one-letter code: dTTP/UTP pyrophosphatase (200 aa).

The Proton acceptor role is filled by Asp81.

This sequence belongs to the Maf family. YhdE subfamily. A divalent metal cation serves as cofactor.

It is found in the cytoplasm. The enzyme catalyses dTTP + H2O = dTMP + diphosphate + H(+). It catalyses the reaction UTP + H2O = UMP + diphosphate + H(+). In terms of biological role, nucleoside triphosphate pyrophosphatase that hydrolyzes dTTP and UTP. May have a dual role in cell division arrest and in preventing the incorporation of modified nucleotides into cellular nucleic acids. This Cupriavidus metallidurans (strain ATCC 43123 / DSM 2839 / NBRC 102507 / CH34) (Ralstonia metallidurans) protein is dTTP/UTP pyrophosphatase.